The chain runs to 293 residues: Porphobilinogen deaminase (293 aa).

Cys235 is subject to S-(dipyrrolylmethanemethyl)cysteine.

Belongs to the HMBS family. As to quaternary structure, monomer. The cofactor is dipyrromethane.

The enzyme catalyses 4 porphobilinogen + H2O = hydroxymethylbilane + 4 NH4(+). The protein operates within porphyrin-containing compound metabolism; protoporphyrin-IX biosynthesis; coproporphyrinogen-III from 5-aminolevulinate: step 2/4. Functionally, tetrapolymerization of the monopyrrole PBG into the hydroxymethylbilane pre-uroporphyrinogen in several discrete steps. This Ruminiclostridium cellulolyticum (strain ATCC 35319 / DSM 5812 / JCM 6584 / H10) (Clostridium cellulolyticum) protein is Porphobilinogen deaminase.